The chain runs to 704 residues: Elongation factor G (704 aa).

Positions 8 to 290 constitute a tr-type G domain; sequence ARYRNIGISA…AVIDYLPSPV (283 aa). Residues 17 to 24, 88 to 92, and 142 to 145 contribute to the GTP site; these read AHIDAGKT, DTPGH, and NKMD. 2 positions are modified to N6-acetyllysine: K504 and K643.

This sequence belongs to the TRAFAC class translation factor GTPase superfamily. Classic translation factor GTPase family. EF-G/EF-2 subfamily.

It is found in the cytoplasm. Catalyzes the GTP-dependent ribosomal translocation step during translation elongation. During this step, the ribosome changes from the pre-translocational (PRE) to the post-translocational (POST) state as the newly formed A-site-bound peptidyl-tRNA and P-site-bound deacylated tRNA move to the P and E sites, respectively. Catalyzes the coordinated movement of the two tRNA molecules, the mRNA and conformational changes in the ribosome. This chain is Elongation factor G, found in Shigella flexneri.